The following is a 269-amino-acid chain: Photosystem I assembly factor PSA3, chloroplastic (269 aa).

Residues 1-37 (MGALPVAHSLALTAAFLPCRRPAAHGRCRRRRYRAVV) constitute a chloroplast transit peptide.

Its subcellular location is the plastid. It localises to the chloroplast thylakoid membrane. In terms of biological role, nuclear genome-encoded factor required for the accumulation of photosystem I (PSI). Functions as a PSI biogenesis factor. Cooperates with PYG7 to promote the stable assembly of PSI in the thylakoid membrane. May target primarily the PsaC subunit. Does not seem to be required for the expression of chloroplast genes encoding PSI subunits. This chain is Photosystem I assembly factor PSA3, chloroplastic, found in Zea mays (Maize).